The chain runs to 481 residues: Zinc metalloproteinase/disintegrin (481 aa).

The N-terminal stretch at 1 to 20 is a signal peptide; that stretch reads MIEVLLVTICLAVFPYQGSS. A propeptide spanning residues 21–189 is cleaved from the precursor; that stretch reads IILESGNVND…KKASQLYLTP (169 aa). Glu190 carries the post-translational modification Pyrrolidone carboxylic acid (Glu). Positions 197–392 constitute a Peptidase M12B domain; that stretch reads RYIKLAIVVD…DNPQCILNAP (196 aa). 296 to 299 lines the an L-amino acid tripeptide pocket; it reads RNTI. 3 disulfides stabilise this stretch: Cys308–Cys387, Cys349–Cys371, and Cys351–Cys354. His333 serves as a coordination point for Zn(2+). Glu334 is an active-site residue. The Zn(2+) site is built by His337 and His343. Ser357 serves as a coordination point for an L-amino acid tripeptide. The propeptide occupies 393–410; sequence LRTDTVSTPVSGNEFLEA. The region spanning 400 to 481 is the Disintegrin domain; it reads TPVSGNEFLE…ADCPRNGLYG (82 aa). 6 cysteine pairs are disulfide-bonded: Cys414/Cys429, Cys416/Cys424, Cys423/Cys446, Cys437/Cys443, Cys442/Cys467, and Cys455/Cys474. Residues 459 to 461 carry the Cell attachment site motif; that stretch reads RGD.

It belongs to the venom metalloproteinase (M12B) family. P-II subfamily. P-IIa sub-subfamily. Monomer. Requires Zn(2+) as cofactor. Post-translationally, the N-terminus is blocked. Expressed by the venom gland.

It localises to the secreted. Inhibited by EDTA and 1,10-phenanthroline. Is also inhibited by endogenous tripeptide inhibitors pyroGlu-Asn-Trp, pyroGlu-Gln-Trp, and pyroGlu-Lys-Trp. In terms of biological role, potent fibrinogenolytic protease which cleaves mainly the Aalpha chain of fibrinogen (FGA) and slightly the Bbeta (FGB) and the gamma (FGG) chains. May possess hemorrhagic activity. Compared to other SVMP, the substrate-binding pocket is relatively shallow. Is less susceptible to tripeptide inhibitors than TM-1 (AC U3KRG1) and TM-2. Functionally, inhibits platelet aggregation induced by ADP, thrombin, platelet-activating factor and collagen. Acts by inhibiting fibrinogen interaction with platelet receptors GPIIb/GPIIIa (ITGA2B/ITGB3). The sequence is that of Zinc metalloproteinase/disintegrin from Protobothrops mucrosquamatus (Taiwan habu).